Reading from the N-terminus, the 152-residue chain is Transcriptional repressor NrdR (152 aa).

A zinc finger lies at 3–34 (CPFCHNEQSRVIDSRVIDSGTSIRRRRECAAC). Positions 46–136 (LSVVKRNGLA…VYKSFESADD (91 aa)) constitute an ATP-cone domain.

It belongs to the NrdR family. Zn(2+) is required as a cofactor.

In terms of biological role, negatively regulates transcription of bacterial ribonucleotide reductase nrd genes and operons by binding to NrdR-boxes. The polypeptide is Transcriptional repressor NrdR (Corynebacterium aurimucosum (strain ATCC 700975 / DSM 44827 / CIP 107346 / CN-1) (Corynebacterium nigricans)).